Consider the following 205-residue polypeptide: Holliday junction branch migration complex subunit RuvA (205 aa).

The interval 1–64 (MIGRLRGLLV…EDAQLLYGFI (64 aa)) is domain I. The tract at residues 65–143 (TKQERALFRL…SLMEASHGNE (79 aa)) is domain II. A flexible linker region spans residues 144-156 (REFVLQSNYTPAP). The interval 157 to 205 (VVNTAEEDAISALLALGYKPAQASKAVSSVFEEGMDSETLIKASLKSML) is domain III.

It belongs to the RuvA family. As to quaternary structure, homotetramer. Forms an RuvA(8)-RuvB(12)-Holliday junction (HJ) complex. HJ DNA is sandwiched between 2 RuvA tetramers; dsDNA enters through RuvA and exits via RuvB. An RuvB hexamer assembles on each DNA strand where it exits the tetramer. Each RuvB hexamer is contacted by two RuvA subunits (via domain III) on 2 adjacent RuvB subunits; this complex drives branch migration. In the full resolvosome a probable DNA-RuvA(4)-RuvB(12)-RuvC(2) complex forms which resolves the HJ.

The protein resides in the cytoplasm. The RuvA-RuvB-RuvC complex processes Holliday junction (HJ) DNA during genetic recombination and DNA repair, while the RuvA-RuvB complex plays an important role in the rescue of blocked DNA replication forks via replication fork reversal (RFR). RuvA specifically binds to HJ cruciform DNA, conferring on it an open structure. The RuvB hexamer acts as an ATP-dependent pump, pulling dsDNA into and through the RuvAB complex. HJ branch migration allows RuvC to scan DNA until it finds its consensus sequence, where it cleaves and resolves the cruciform DNA. This Shewanella loihica (strain ATCC BAA-1088 / PV-4) protein is Holliday junction branch migration complex subunit RuvA.